A 494-amino-acid polypeptide reads, in one-letter code: Ceramide glucosyltransferase (494 aa).

Residues 1–6 (MPLLMD) lie on the Lumenal side of the membrane. The chain crosses the membrane as a helical span at residues 7–27 (GLAYAGAIWSLIVFCVQAIGL). Over 28-337 (YQLFRSYSRP…VRWLRVRKWT (310 aa)) the chain is Cytoplasmic. Residue D95 is a short sequence motif, D1. A short sequence motif (D2) is located at residue D160. D285 is a short sequence motif (D3). Residue D285 is the Proton acceptor of the active site. The (Q/R)XXRW signature appears at 326–330 (RRVRW). The chain crosses the membrane as a helical span at residues 338–358 (VLLATLVEPGVESMVCCMAFA). The Lumenal portion of the chain corresponds to 359-380 (HALTTTPWCPNPADWPIPHTWT). Residues 381–401 (ALWSIWLAAIAVWATLDYVVY) traverse the membrane as a helical segment. Residues 402–428 (HFLHSCRSIEKDADSPDFAQGNELMKR) are Cytoplasmic-facing. The helical transmembrane segment at 429–449 (PFGAWILAWIGREILALPIWT) threads the bilayer. At 450–494 (RAVLLGTTVTWRGTKFKVRPDQSVVDIPNAGAKSNGIGSTNRKVR) the chain is on the lumenal side.

This sequence belongs to the glycosyltransferase 2 family.

The protein resides in the golgi apparatus membrane. The enzyme catalyses an N-acylsphing-4-enine + UDP-alpha-D-glucose = a beta-D-glucosyl-(1&lt;-&gt;1')-N-acylsphing-4-enine + UDP + H(+). It functions in the pathway lipid metabolism; sphingolipid metabolism. In terms of biological role, catalyzes the final step in the biosynthesis of the membrane lipid glucosylceramide (GluCer), the transfer of glucose to ceramide. Glucosylceramides play important roles in growth, differentiation and pathogenicity. The protein is Ceramide glucosyltransferase of Pyricularia oryzae (strain 70-15 / ATCC MYA-4617 / FGSC 8958) (Rice blast fungus).